A 123-amino-acid chain; its full sequence is Small ribosomal subunit protein uS12 (123 aa).

The interval 1–21 is disordered; sequence MPTIEQLVRKGRQAKPKKSKT. Residues 9 to 20 show a composition bias toward basic residues; sequence RKGRQAKPKKSK. D89 is subject to 3-methylthioaspartic acid.

Belongs to the universal ribosomal protein uS12 family. As to quaternary structure, part of the 30S ribosomal subunit. Contacts proteins S8 and S17. May interact with IF1 in the 30S initiation complex.

Its function is as follows. With S4 and S5 plays an important role in translational accuracy. In terms of biological role, interacts with and stabilizes bases of the 16S rRNA that are involved in tRNA selection in the A site and with the mRNA backbone. Located at the interface of the 30S and 50S subunits, it traverses the body of the 30S subunit contacting proteins on the other side and probably holding the rRNA structure together. The combined cluster of proteins S8, S12 and S17 appears to hold together the shoulder and platform of the 30S subunit. The sequence is that of Small ribosomal subunit protein uS12 from Bifidobacterium longum subsp. infantis (strain ATCC 15697 / DSM 20088 / JCM 1222 / NCTC 11817 / S12).